The primary structure comprises 428 residues: Enolase (428 aa).

Glutamine 163 contributes to the (2R)-2-phosphoglycerate binding site. The active-site Proton donor is glutamate 205. Residues aspartate 242, glutamate 285, and aspartate 312 each contribute to the Mg(2+) site. Lysine 337, arginine 366, serine 367, and lysine 388 together coordinate (2R)-2-phosphoglycerate. Catalysis depends on lysine 337, which acts as the Proton acceptor.

The protein belongs to the enolase family. The cofactor is Mg(2+).

It is found in the cytoplasm. Its subcellular location is the secreted. It localises to the cell surface. It carries out the reaction (2R)-2-phosphoglycerate = phosphoenolpyruvate + H2O. Its pathway is carbohydrate degradation; glycolysis; pyruvate from D-glyceraldehyde 3-phosphate: step 4/5. Catalyzes the reversible conversion of 2-phosphoglycerate (2-PG) into phosphoenolpyruvate (PEP). It is essential for the degradation of carbohydrates via glycolysis. The polypeptide is Enolase (Moorella thermoacetica (strain ATCC 39073 / JCM 9320)).